Reading from the N-terminus, the 203-residue chain is Outer-membrane lipoprotein carrier protein (203 aa).

Positions 1-21 are cleaved as a signal peptide; sequence MKKLLVACCLLSGLISAHALA.

Belongs to the LolA family. As to quaternary structure, monomer.

The protein resides in the periplasm. In terms of biological role, participates in the translocation of lipoproteins from the inner membrane to the outer membrane. Only forms a complex with a lipoprotein if the residue after the N-terminal Cys is not an aspartate (The Asp acts as a targeting signal to indicate that the lipoprotein should stay in the inner membrane). In Yersinia enterocolitica serotype O:8 / biotype 1B (strain NCTC 13174 / 8081), this protein is Outer-membrane lipoprotein carrier protein.